Consider the following 179-residue polypeptide: Large ribosomal subunit protein uL5 (179 aa).

Belongs to the universal ribosomal protein uL5 family. Part of the 50S ribosomal subunit; part of the 5S rRNA/L5/L18/L25 subcomplex. Contacts the 5S rRNA and the P site tRNA. Forms a bridge to the 30S subunit in the 70S ribosome.

This is one of the proteins that bind and probably mediate the attachment of the 5S RNA into the large ribosomal subunit, where it forms part of the central protuberance. In the 70S ribosome it contacts protein S13 of the 30S subunit (bridge B1b), connecting the 2 subunits; this bridge is implicated in subunit movement. Contacts the P site tRNA; the 5S rRNA and some of its associated proteins might help stabilize positioning of ribosome-bound tRNAs. This is Large ribosomal subunit protein uL5 from Hamiltonella defensa subsp. Acyrthosiphon pisum (strain 5AT).